A 439-amino-acid polypeptide reads, in one-letter code: Polygalacturonase QRT2 (439 aa).

The N-terminal stretch at Met-1–Ser-21 is a signal peptide. The tract at residues Arg-43–Arg-69 is disordered. Positions Gln-44–Tyr-62 are enriched in basic residues. PbH1 repeat units lie at residues Cys-201–Gly-250 and Thr-251–Ser-272. Asp-265 serves as the catalytic Proton donor. His-288 is an active-site residue. PbH1 repeat units follow at residues Val-304–Thr-325 and Ala-333–Gln-354.

The protein belongs to the glycosyl hydrolase 28 family. As to expression, expressed predominantly in roots with lower expression levels in rosette leaves, flower buds and siliques. Bearly detected in seeds. Found in flowers undergoing floral organ abscission. Also expressed early in anther development, at the time of microspore separation.

The protein localises to the secreted. It is found in the cell wall. The catalysed reaction is (1,4-alpha-D-galacturonosyl)n+m + H2O = (1,4-alpha-D-galacturonosyl)n + (1,4-alpha-D-galacturonosyl)m.. Polygalacturonase required for cell type-specific pectin degradation to separate microspores. Involved in anther dehiscence and floral organ abscission. The sequence is that of Polygalacturonase QRT2 (QRT2) from Arabidopsis thaliana (Mouse-ear cress).